The following is a 196-amino-acid chain: Small ribosomal subunit protein uS4c (196 aa).

Residues 15–43 form a disordered region; sequence LGALPGLTRKTPKSGSNQKKKFHSGKKEQ. The region spanning 89-150 is the S4 RNA-binding domain; sequence MRLDNILFRL…NQRSKRLVQN (62 aa).

Belongs to the universal ribosomal protein uS4 family. In terms of assembly, part of the 30S ribosomal subunit. Contacts protein S5. The interaction surface between S4 and S5 is involved in control of translational fidelity.

The protein localises to the plastid. Its subcellular location is the chloroplast. Functionally, one of the primary rRNA binding proteins, it binds directly to 16S rRNA where it nucleates assembly of the body of the 30S subunit. In terms of biological role, with S5 and S12 plays an important role in translational accuracy. This Bothriochloa ischaemum (Yellow bluestem) protein is Small ribosomal subunit protein uS4c (rps4).